The following is a 1456-amino-acid chain: MLTPVRCRTVPNATVATAARVLRRANLFSRYPRQLGHLRWDSTIAQVLERKGLGVPSTARHNEIGVQQLSEHLYKQLFPRGNTDPPAPELIELAKDHLARHDLLGKTTDKTPPIAFQLPALVGDTLDEHFHKLGVDAAEPFLTHAKQFADAHLPPKPTSWVRRSGWTKYNRDGTTENDVLPQGNMMCFDVEVMYKDNPYAVMACAGTPDAWYAWLSPWLLGETENKAQLVPMGDPTVDRIIVGHNIGYDRAKILEEYDLKQTRNFFLDTMSLHVAVNGMCSQQRPTWMKHKKARELREKAEHESASVELQEVLQGGSLTAEEADLWVDKSSINSLRDVAQFHLNVKIDKDIRDVFAETDRNVILNQLDDLLTYCAADVQVTHQVYQVVFPNFLGVCPHPVSFAALRHLASVILPVNKTWDTYIETAEATYLQMLHGVQERLFTLMERTLDYKADPEKYLSDPWLSQLDWSGQEIKMAKPKKKGDVERPALNQKLPGYPQWYKDLFVKVPKELSGLDEPDKEQENRKARHEFINLTVRSRIAPLLLKLSWEGYPLFWSDQFGWTFQVPREKAETFIQRQMTPVQFEDPDVDDRLRMDVDHKYFKLPHKDGPNARCVNPMAKGYLPYFEKGILSSEYPYAKEALEMNASCSYWISARERIKNQMVVYEDQLPPSQRFVNKDADSNTPIGGFVLPQVIPMGTITRRAVERTWLTASNAKKNRVGSELKAMVRAPPGYVFVGADVDSEELWIASVVGDATFKLHGGNAIGFMTLEGTKSQGTDLHSRTASILGITRNDAKVFNYGRIYGAGLKFASQLLRQFNPSLTEAETTAIATKLYDATKGAKTNRKSLYKRPFWRGGTESFVFNMLEEFAEQERPRTPVLGAGITEALMSRWVSKGGFLTSRINWAIQSSGVDYLHLLIIAMDYLTRRFNLACRLAITVHDEIRYLAEEPDKYRVAMALQIANLWTRVMFAQQVGIQDLPQSCAFFSAVDIDHVLRKEVDMDCITPSNPIPIAHGESIDIFQILEKGDDAKLDDSIVPQSQYAPRLENIPYTPRVPVMQRLRERAEAGDHQAFLRFIRAQITNSDEELKRIIAETRYSDPYGAFSLASNGRVSGNPHQRHAAVHASTKTAAAPSKPSIASRFDSVSQASRIKSVAAGSDEPTIRATKAQGKAMAKASGTKLAASTKDTVLNVTIKKKVAAPEMAAVPSTSSESKSKASATTSTTTTENATASPSSSSNVDAKKTTSKTKPTHKKETEGEPFPSLDDPVIAARLEAVSKTSPGTRASVAAKLDALASFSMRAAAAAEAAVTTTTTPEPPTNPPPVAPKAKEPTTTMAEKVLKPTAVPKNPTPTLTPTTKKSNPTSTPTTPKPVGRPRTTPILPYTAPKKKLPSSAFSKEQKEPMSVSEAVWTASVGGRATTTTATATATGDEKKKTTTTPSWKPVKESLFGRGVYIP.

Residues 1–41 (MLTPVRCRTVPNATVATAARVLRRANLFSRYPRQLGHLRWD) constitute a mitochondrion transit peptide. Disordered regions lie at residues 1200-1266 (APEM…SLDD) and 1308-1443 (AVTT…SWKP). Over residues 1204-1239 (AAVPSTSSESKSKASATTSTTTTENATASPSSSSNV) the composition is skewed to low complexity. A compositionally biased stretch (pro residues) spans 1315-1325 (PEPPTNPPPVA). Low complexity-rich tracts occupy residues 1346–1371 (PKNPTPTLTPTTKKSNPTSTPTTPKP) and 1411–1428 (TASVGGRATTTTATATAT).

Belongs to the DNA polymerase type-A family. Mg(2+) is required as a cofactor.

The protein localises to the mitochondrion. The enzyme catalyses DNA(n) + a 2'-deoxyribonucleoside 5'-triphosphate = DNA(n+1) + diphosphate. Functionally, involved in the replication of mitochondrial DNA. This is DNA polymerase gamma, mitochondrial (mip-1) from Neurospora crassa (strain ATCC 24698 / 74-OR23-1A / CBS 708.71 / DSM 1257 / FGSC 987).